Reading from the N-terminus, the 356-residue chain is Dual-specificity RNA methyltransferase RlmN (356 aa).

E89 (proton acceptor) is an active-site residue. The Radical SAM core domain maps to 108–341 (SHARYTICVS…CTIRESKGLD (234 aa)). A disulfide bridge connects residues C115 and C346. [4Fe-4S] cluster is bound by residues C122, C126, and C129. Residues 172-173 (GE), S204, 227-229 (SLH), and N303 contribute to the S-adenosyl-L-methionine site. Residue C346 is the S-methylcysteine intermediate of the active site.

The protein belongs to the radical SAM superfamily. RlmN family. The cofactor is [4Fe-4S] cluster.

It localises to the cytoplasm. The enzyme catalyses adenosine(2503) in 23S rRNA + 2 reduced [2Fe-2S]-[ferredoxin] + 2 S-adenosyl-L-methionine = 2-methyladenosine(2503) in 23S rRNA + 5'-deoxyadenosine + L-methionine + 2 oxidized [2Fe-2S]-[ferredoxin] + S-adenosyl-L-homocysteine. It catalyses the reaction adenosine(37) in tRNA + 2 reduced [2Fe-2S]-[ferredoxin] + 2 S-adenosyl-L-methionine = 2-methyladenosine(37) in tRNA + 5'-deoxyadenosine + L-methionine + 2 oxidized [2Fe-2S]-[ferredoxin] + S-adenosyl-L-homocysteine. Functionally, specifically methylates position 2 of adenine 2503 in 23S rRNA and position 2 of adenine 37 in tRNAs. m2A2503 modification seems to play a crucial role in the proofreading step occurring at the peptidyl transferase center and thus would serve to optimize ribosomal fidelity. The sequence is that of Dual-specificity RNA methyltransferase RlmN from Campylobacter jejuni subsp. jejuni serotype O:23/36 (strain 81-176).